The primary structure comprises 342 residues: Phenylalanine--tRNA ligase alpha subunit (342 aa).

Glu-255 is a Mg(2+) binding site.

Belongs to the class-II aminoacyl-tRNA synthetase family. Phe-tRNA synthetase alpha subunit type 1 subfamily. As to quaternary structure, tetramer of two alpha and two beta subunits. It depends on Mg(2+) as a cofactor.

The protein resides in the cytoplasm. It catalyses the reaction tRNA(Phe) + L-phenylalanine + ATP = L-phenylalanyl-tRNA(Phe) + AMP + diphosphate + H(+). The chain is Phenylalanine--tRNA ligase alpha subunit from Pelodictyon phaeoclathratiforme (strain DSM 5477 / BU-1).